The following is a 138-amino-acid chain: FUN14 domain-containing protein fndc-1 (138 aa).

Transmembrane regions (helical) follow at residues Pro-37–Thr-56 and Leu-61–His-78. N-linked (GlcNAc...) asparagine glycosylation is found at Asn-85 and Asn-111.

This sequence belongs to the FUN14 family. In terms of tissue distribution, broadly expressed in somatic tissues. Expressed in the hermaphrodite spermatheca and male gonad. Expressed in spermatids, but not expressed in oocytes.

It is found in the mitochondrion outer membrane. Its function is as follows. Mitophagy receptor which plays a role in paternal mitochondria degradation in embryos after the two-cell stage. This is FUN14 domain-containing protein fndc-1 from Caenorhabditis elegans.